A 32-amino-acid chain; its full sequence is Trypsin inhibitor 2b (32 aa).

Intrachain disulfides connect Cys-3–Cys-20, Cys-10–Cys-22, and Cys-16–Cys-29.

It belongs to the protease inhibitor I7 (squash-type serine protease inhibitor) family.

It localises to the secreted. Inhibits trypsin. The sequence is that of Trypsin inhibitor 2b from Cucumis sativus (Cucumber).